The following is a 385-amino-acid chain: MNNLILVKYASEIFLKGLNKNKFERKLKENIRKKLKDIDHEFITDQNRWFIKSEDLDGVIERVKKVFGVKELCLVTQVEGDFDSIKEEGLKKIKESKAKSFKVETNRANKKFPMNSMEVSRAVGGYILSELGDEIEVDIHNPECKLYVEIRGNAYVFTDKDKIKAVGGLPYGMNGSTMVMLSGGIDSPVAAYLMARRGVETHCVYYHSHPYTSERAKDKVKELAKIVGRYTEKITLYVVPFTEIQMDIIEKCREDELTIIMRRFMMRVACELSERKKIQSITTGESIGQVASQTMEGLMVSNDVSDRPVFRPLIAMDKEDIMDIARDIDTYETSILPYEDCCTIFVPKHPKTKPRVKDMIIAERKLDIEALVNKAIDEMETFIFE.

Residues 57 to 160 enclose the THUMP domain; that stretch reads DGVIERVKKV…RGNAYVFTDK (104 aa). ATP is bound by residues 180–181, 205–206, R262, G284, and Q293; these read ML and YY.

This sequence belongs to the ThiI family.

Its subcellular location is the cytoplasm. It carries out the reaction [ThiI sulfur-carrier protein]-S-sulfanyl-L-cysteine + a uridine in tRNA + 2 reduced [2Fe-2S]-[ferredoxin] + ATP + H(+) = [ThiI sulfur-carrier protein]-L-cysteine + a 4-thiouridine in tRNA + 2 oxidized [2Fe-2S]-[ferredoxin] + AMP + diphosphate. The enzyme catalyses [ThiS sulfur-carrier protein]-C-terminal Gly-Gly-AMP + S-sulfanyl-L-cysteinyl-[cysteine desulfurase] + AH2 = [ThiS sulfur-carrier protein]-C-terminal-Gly-aminoethanethioate + L-cysteinyl-[cysteine desulfurase] + A + AMP + 2 H(+). It functions in the pathway cofactor biosynthesis; thiamine diphosphate biosynthesis. Functionally, catalyzes the ATP-dependent transfer of a sulfur to tRNA to produce 4-thiouridine in position 8 of tRNAs, which functions as a near-UV photosensor. Also catalyzes the transfer of sulfur to the sulfur carrier protein ThiS, forming ThiS-thiocarboxylate. This is a step in the synthesis of thiazole, in the thiamine biosynthesis pathway. The sulfur is donated as persulfide by IscS. This Clostridium perfringens (strain ATCC 13124 / DSM 756 / JCM 1290 / NCIMB 6125 / NCTC 8237 / Type A) protein is Probable tRNA sulfurtransferase.